The following is a 100-amino-acid chain: MQTHVRRVALQALRPCLRAGLMAPKFPVRFATTAVSGELLTKTPYTRPGYAAQWTCLVVLFLKNQLLMRLFFAFVAYVVAMKVFGARFHVDHDEDATPAE.

A mitochondrion-targeting transit peptide spans 1–30; it reads MQTHVRRVALQALRPCLRAGLMAPKFPVRF. Residues 66 to 86 traverse the membrane as a helical segment; the sequence is LLMRLFFAFVAYVVAMKVFGA.

As to quaternary structure, plants bc1 complex contains 10 subunits; 3 respiratory subunits, 2 core proteins and 5 low-molecular weight proteins.

It is found in the mitochondrion inner membrane. This is a component of the ubiquinol-cytochrome c reductase complex (complex III or cytochrome b-c1 complex), which is part of the mitochondrial respiratory chain. This chain is Ubiquinol-cytochrome-C reductase complex subunit IX, mitochondrial, found in Euglena gracilis.